The primary structure comprises 128 residues: Ribonuclease pancreatic B (128 aa).

The disordered stretch occupies residues 1–21 (AESSAMKFQRQHMDPEGSPSN). The substrate site is built by Lys-7 and Arg-10. His-12 acts as the Proton acceptor in catalysis. N-linked (GlcNAc...) asparagine glycosylation is found at Asn-21 and Asn-34. Intrachain disulfides connect Cys-26–Cys-84, Cys-40–Cys-95, Cys-58–Cys-110, and Cys-65–Cys-72. Substrate is bound by residues 41 to 45 (KPVNT), Lys-66, and Arg-85. His-119 serves as the catalytic Proton donor.

It belongs to the pancreatic ribonuclease family. Pancreas.

Its subcellular location is the secreted. It catalyses the reaction an [RNA] containing cytidine + H2O = an [RNA]-3'-cytidine-3'-phosphate + a 5'-hydroxy-ribonucleotide-3'-[RNA].. The catalysed reaction is an [RNA] containing uridine + H2O = an [RNA]-3'-uridine-3'-phosphate + a 5'-hydroxy-ribonucleotide-3'-[RNA].. In Cavia porcellus (Guinea pig), this protein is Ribonuclease pancreatic B.